The following is a 215-amino-acid chain: Interleukin-12 subunit alpha (215 aa).

An N-terminal signal peptide occupies residues 1 to 22; it reads MCSSRCLLFLATLAFLIHLSLA. 3 disulfides stabilise this stretch: Cys33/Cys106, Cys60/Cys192, and Cys81/Cys119. An N-linked (GlcNAc...) asparagine glycan is attached at Asn89.

Belongs to the IL-6 superfamily. In terms of assembly, heterodimer with IL12B; disulfide-linked. This heterodimer is known as interleukin IL-12. Heterodimer with EBI3/IL27B; not disulfide-linked. This heterodimer is known as interleukin IL-35. Interacts with NBR1; this interaction promotes IL-12 secretion.

The protein localises to the secreted. In terms of biological role, heterodimerizes with IL12B to form the IL-12 cytokine or with EBI3/IL27B to form the IL-35 cytokine. IL-12 is primarily produced by professional antigen-presenting cells (APCs) such as B-cells and dendritic cells (DCs) as well as macrophages and granulocytes and regulates T-cell and natural killer-cell responses, induces the production of interferon-gamma (IFN-gamma), favors the differentiation of T-helper 1 (Th1) cells and is an important link between innate resistance and adaptive immunity. Mechanistically, exerts its biological effects through a receptor composed of IL12R1 and IL12R2 subunits. Binding to the receptor results in the rapid tyrosine phosphorylation of a number of cellular substrates including the JAK family kinases TYK2 and JAK2. In turn, recruited STAT4 gets phosphorylated and translocates to the nucleus where it regulates cytokine/growth factor responsive genes. As part of IL-35, plays essential roles in maintaining the immune homeostasis of the liver microenvironment and also functions as an immune-suppressive cytokine. Mediates biological events through unconventional receptors composed of IL12RB2 and gp130/IL6ST heterodimers or homodimers. Signaling requires the transcription factors STAT1 and STAT4, which form a unique heterodimer that binds to distinct DNA sites. The sequence is that of Interleukin-12 subunit alpha (IL12A) from Sigmodon hispidus (Hispid cotton rat).